The sequence spans 192 residues: dCTP deaminase, dUMP-forming (192 aa).

DCTP contacts are provided by residues 101-106 (KSSLGR), aspartate 119, 127-129 (TLE), glutamine 148, tyrosine 162, and glutamine 174. Glutamate 129 serves as the catalytic Proton donor/acceptor. The disordered stretch occupies residues 162–192 (YGSGADGSRYQGQRGPTASRSHVKFHRTHVE). Positions 171 to 181 (YQGQRGPTASR) are enriched in polar residues. The span at 182-192 (SHVKFHRTHVE) shows a compositional bias: basic residues.

Belongs to the dCTP deaminase family. Homotrimer.

It carries out the reaction dCTP + 2 H2O = dUMP + NH4(+) + diphosphate. It participates in pyrimidine metabolism; dUMP biosynthesis; dUMP from dCTP: step 1/1. Functionally, bifunctional enzyme that catalyzes both the deamination of dCTP to dUTP and the hydrolysis of dUTP to dUMP without releasing the toxic dUTP intermediate. This Beutenbergia cavernae (strain ATCC BAA-8 / DSM 12333 / CCUG 43141 / JCM 11478 / NBRC 16432 / NCIMB 13614 / HKI 0122) protein is dCTP deaminase, dUMP-forming.